Here is a 154-residue protein sequence, read N- to C-terminus: Endoribonuclease YbeY (154 aa).

Histidine 117, histidine 121, and histidine 127 together coordinate Zn(2+).

The protein belongs to the endoribonuclease YbeY family. Zn(2+) serves as cofactor.

It is found in the cytoplasm. Functionally, single strand-specific metallo-endoribonuclease involved in late-stage 70S ribosome quality control and in maturation of the 3' terminus of the 16S rRNA. This is Endoribonuclease YbeY from Aromatoleum aromaticum (strain DSM 19018 / LMG 30748 / EbN1) (Azoarcus sp. (strain EbN1)).